Consider the following 396-residue polypeptide: Elongation factor Tu (396 aa).

Residues 10-206 (KPHCNIGTIG…AVDSYIPQPE (197 aa)) enclose the tr-type G domain. The tract at residues 19–26 (GHVDHGKT) is G1. 19 to 26 (GHVDHGKT) is a GTP binding site. A Mg(2+)-binding site is contributed by T26. Residues 60–64 (GITIS) form a G2 region. The segment at 81–84 (DCPG) is G3. Residues 81-85 (DCPGH) and 136-139 (NKCD) contribute to the GTP site. The interval 136-139 (NKCD) is G4. The segment at 174 to 176 (SAL) is G5.

Belongs to the TRAFAC class translation factor GTPase superfamily. Classic translation factor GTPase family. EF-Tu/EF-1A subfamily. Monomer.

The protein localises to the cytoplasm. It carries out the reaction GTP + H2O = GDP + phosphate + H(+). In terms of biological role, GTP hydrolase that promotes the GTP-dependent binding of aminoacyl-tRNA to the A-site of ribosomes during protein biosynthesis. In Rhodopseudomonas palustris (strain BisA53), this protein is Elongation factor Tu.